We begin with the raw amino-acid sequence, 371 residues long: Chaperone protein DnaJ (371 aa).

A J domain is found at 5–70; that stretch reads CYYEILNVSK…SKRSRYDQFG (66 aa). The CR-type zinc-finger motif lies at 127-204; that stretch reads GVEKEITIPR…CYGNGKVKKQ (78 aa). The Zn(2+) site is built by Cys-140, Cys-143, Cys-156, Cys-159, Cys-178, Cys-181, Cys-192, and Cys-195. CXXCXGXG motif repeat units follow at residues 140–147, 156–163, 178–185, and 192–199; these read CDSCDGTG, CHACHGQG, CPVCNGTG, and CDACYGNG.

Belongs to the DnaJ family. As to quaternary structure, homodimer. Requires Zn(2+) as cofactor.

It is found in the cytoplasm. In terms of biological role, participates actively in the response to hyperosmotic and heat shock by preventing the aggregation of stress-denatured proteins and by disaggregating proteins, also in an autonomous, DnaK-independent fashion. Unfolded proteins bind initially to DnaJ; upon interaction with the DnaJ-bound protein, DnaK hydrolyzes its bound ATP, resulting in the formation of a stable complex. GrpE releases ADP from DnaK; ATP binding to DnaK triggers the release of the substrate protein, thus completing the reaction cycle. Several rounds of ATP-dependent interactions between DnaJ, DnaK and GrpE are required for fully efficient folding. Also involved, together with DnaK and GrpE, in the DNA replication of plasmids through activation of initiation proteins. In Francisella tularensis subsp. tularensis (strain WY96-3418), this protein is Chaperone protein DnaJ.